The following is a 222-amino-acid chain: Kinetochore protein Spc25 (222 aa).

Positions 51 to 86 (RHQRKVGKLQKVLMERREELDKRVSFIEELDRELEA) form a coiled coil.

Belongs to the SPC25 family. In terms of assembly, component of the Ndc80 complex, which is composed of Ndc80, Nuf2 and Spc25.

The protein resides in the nucleus. It localises to the chromosome. Its subcellular location is the centromere. The protein localises to the kinetochore. In terms of biological role, acts as a component of the essential kinetochore-associated Ndc80 complex, which is required for chromosome segregation and spindle checkpoint activity during meiosis and mitosis. Required for kinetochore integrity and the organization of stable microtubule binding sites in the outer plate of the kinetochore. Participates in SAC signaling that responds specifically to disruptions in spindle microtubule dynamics. The NDC80 complex synergistically enhances the affinity of the SKA1 complex for microtubules and may allow the NDC80 complex to track depolymerizing microtubules. The polypeptide is Kinetochore protein Spc25 (Drosophila mauritiana (Fruit fly)).